The primary structure comprises 369 residues: Phosphoribosyl pyrophosphate synthase-associated protein 2 (369 aa).

Residue M1 is modified to N-acetylmethionine. T5 is subject to Phosphothreonine. Phosphoserine occurs at positions 219, 227, and 233.

It belongs to the ribose-phosphate pyrophosphokinase family. Binds to PRPS1 and PRPS2.

In terms of biological role, seems to play a negative regulatory role in 5-phosphoribose 1-diphosphate synthesis. The protein is Phosphoribosyl pyrophosphate synthase-associated protein 2 (PRPSAP2) of Pongo abelii (Sumatran orangutan).